Here is a 264-residue protein sequence, read N- to C-terminus: uncharacterized protein (264 aa).

Disordered stretches follow at residues 1 to 52 (MPRS…AVPG) and 123 to 207 (GGRW…PWTR). Over residues 29–40 (AAHPTTSPTAAS) the composition is skewed to low complexity. Residues 144 to 154 (HFQSSGAQQES) show a composition bias toward polar residues. A compositionally biased stretch (basic residues) spans 188–197 (ARKSACKCPR).

This is an uncharacterized protein from Homo sapiens (Human).